The primary structure comprises 249 residues: Cytoplasmic envelopment protein 1 (249 aa).

It belongs to the herpesviridae cytoplasmic envelopment protein 1 family.

It is found in the virion. The protein resides in the virion tegument. Its subcellular location is the host cytoplasm. The protein localises to the host Golgi apparatus. Its function is as follows. Plays a critical role in cytoplasmic virus egress. Participates in the final step of tegumentation and envelope acquisition within the host cytoplasm. This chain is Cytoplasmic envelopment protein 1 (UL103), found in Homo sapiens (Human).